The chain runs to 254 residues: MSPNIRPFIAGNWKMNGTGESLGELRAIAAGISSDLGRLFEALICVPATLLSRAFDILGGENILLGGQNCHFDDYGPYTGDISAFMLKEAGASHVIIGHSERRTVYQESDAIVRAKVQAAWRAGLVALICVGETLEERKSNKVLDVLTRQLEGSLPDGATAENIIIAYEPVWAVGTGNTATSADVAEVHAFIHHKMHSRFGDEGAKIRLLYGGSVKPSNAFELLSTAHVNGALIGGASLKAIDFLTICDVYRKL.

Residue 12–14 coordinates substrate; that stretch reads NWK. Catalysis depends on H99, which acts as the Electrophile. E169 serves as the catalytic Proton acceptor. Residues G175, S214, and 235-236 each bind substrate; that span reads GG.

The protein belongs to the triosephosphate isomerase family. In terms of assembly, homodimer.

It is found in the cytoplasm. The catalysed reaction is D-glyceraldehyde 3-phosphate = dihydroxyacetone phosphate. The protein operates within carbohydrate biosynthesis; gluconeogenesis. It functions in the pathway carbohydrate degradation; glycolysis; D-glyceraldehyde 3-phosphate from glycerone phosphate: step 1/1. Its function is as follows. Involved in the gluconeogenesis. Catalyzes stereospecifically the conversion of dihydroxyacetone phosphate (DHAP) to D-glyceraldehyde-3-phosphate (G3P). The protein is Triosephosphate isomerase of Bartonella henselae (strain ATCC 49882 / DSM 28221 / CCUG 30454 / Houston 1) (Rochalimaea henselae).